The chain runs to 405 residues: Phosphopentomutase (405 aa).

Mn(2+) contacts are provided by D10, D303, H308, D344, H345, and H356.

This sequence belongs to the phosphopentomutase family. Mn(2+) is required as a cofactor.

The protein resides in the cytoplasm. The catalysed reaction is 2-deoxy-alpha-D-ribose 1-phosphate = 2-deoxy-D-ribose 5-phosphate. It catalyses the reaction alpha-D-ribose 1-phosphate = D-ribose 5-phosphate. It functions in the pathway carbohydrate degradation; 2-deoxy-D-ribose 1-phosphate degradation; D-glyceraldehyde 3-phosphate and acetaldehyde from 2-deoxy-alpha-D-ribose 1-phosphate: step 1/2. Isomerase that catalyzes the conversion of deoxy-ribose 1-phosphate (dRib-1-P) and ribose 1-phosphate (Rib-1-P) to deoxy-ribose 5-phosphate (dRib-5-P) and ribose 5-phosphate (Rib-5-P), respectively. The polypeptide is Phosphopentomutase (Shewanella pealeana (strain ATCC 700345 / ANG-SQ1)).